The sequence spans 583 residues: Putative rhophilin-2-like protein RHPN2P1 (583 aa).

The region spanning 26-375 is the BRO1 domain; the sequence is PLIPLGLKET…RLTYAQHQED (350 aa). Residues 412–490 enclose the PDZ domain; it reads RSNRFTAEEG…DEIEMKVVSL (79 aa).

This chain is Putative rhophilin-2-like protein RHPN2P1 (RHPN2P1), found in Homo sapiens (Human).